The chain runs to 89 residues: Small ribosomal subunit protein uS14A (89 aa).

It belongs to the universal ribosomal protein uS14 family. As to quaternary structure, part of the 30S ribosomal subunit. Contacts proteins S3 and S10.

Its function is as follows. Binds 16S rRNA, required for the assembly of 30S particles and may also be responsible for determining the conformation of the 16S rRNA at the A site. The chain is Small ribosomal subunit protein uS14A from Bacillus pumilus (strain SAFR-032).